The following is a 133-amino-acid chain: Helix-loop-helix protein 1 (133 aa).

The disordered stretch occupies residues 1 to 78; sequence MMLNSDTMEL…RRRATAKYRT (78 aa). The span at 25–39 shows a compositional bias: gly residues; the sequence is DCGGGPGPDGAGSGD. A compositionally biased stretch (basic and acidic residues) spans 52–65; that stretch reads ESGRKDLQHLSREE. Residues 66–78 show a composition bias toward basic residues; the sequence is RRRRRRATAKYRT. One can recognise a bHLH domain in the interval 75–127; the sequence is KYRTAHATRERIRVEAFNLAFAELRKLLPTLPPDKKLSKIEILRLAICYISYL.

Efficient DNA binding requires dimerization with another bHLH protein.

The protein localises to the nucleus. May serve as DNA-binding protein and may be involved in the control of cell-type determination, possibly within the developing nervous system. In Mus musculus (Mouse), this protein is Helix-loop-helix protein 1 (Nhlh1).